A 493-amino-acid chain; its full sequence is Non-cyanogenic beta-glucosidase (493 aa).

The N-terminal stretch at 1–18 is a signal peptide; sequence MDFIVAIFALFVISSFTI. The N-linked (GlcNAc...) asparagine glycan is linked to Asn34. Residues Gln54, His158, and 203 to 204 contribute to the a beta-D-glucoside site; that span reads NE. Residue Glu204 is the Proton donor of the active site. Asn335 carries an N-linked (GlcNAc...) asparagine glycan. Tyr346 is a binding site for a beta-D-glucoside. Residues Asn371 and Asn412 are each glycosylated (N-linked (GlcNAc...) asparagine). A beta-D-glucoside is bound by residues Glu422, Trp471, 478–479, and Phe487; that span reads EW. The active-site Nucleophile is Glu422.

This sequence belongs to the glycosyl hydrolase 1 family. Leaves.

The catalysed reaction is Hydrolysis of terminal, non-reducing beta-D-glucosyl residues with release of beta-D-glucose.. In Trifolium repens (Creeping white clover), this protein is Non-cyanogenic beta-glucosidase.